Reading from the N-terminus, the 421-residue chain is UDP-N-acetylglucosamine 1-carboxyvinyltransferase 1 (421 aa).

Residue 22 to 23 (KN) coordinates phosphoenolpyruvate. Residue arginine 94 coordinates UDP-N-acetyl-alpha-D-glucosamine. The Proton donor role is filled by cysteine 118. Position 118 is a 2-(S-cysteinyl)pyruvic acid O-phosphothioketal (cysteine 118). Residues 123–127 (RPIEL), aspartate 310, and valine 332 contribute to the UDP-N-acetyl-alpha-D-glucosamine site.

It belongs to the EPSP synthase family. MurA subfamily.

It is found in the cytoplasm. It catalyses the reaction phosphoenolpyruvate + UDP-N-acetyl-alpha-D-glucosamine = UDP-N-acetyl-3-O-(1-carboxyvinyl)-alpha-D-glucosamine + phosphate. It functions in the pathway cell wall biogenesis; peptidoglycan biosynthesis. In terms of biological role, cell wall formation. Adds enolpyruvyl to UDP-N-acetylglucosamine. This is UDP-N-acetylglucosamine 1-carboxyvinyltransferase 1 from Clostridium perfringens (strain 13 / Type A).